A 734-amino-acid chain; its full sequence is Photosystem I P700 chlorophyll a apoprotein A2 (734 aa).

8 helical membrane-spanning segments follow: residues 46 to 69 (IFAS…FHVA), 135 to 158 (LYTG…LHLQ), 175 to 199 (LNHH…HVAI), 273 to 291 (IAHH…GHMY), 330 to 353 (LHFQ…QHIY), 369 to 395 (AALY…IFFI), 417 to 439 (AIIS…LYVH), and 517 to 535 (FLVH…LILV). Positions 559 and 568 each coordinate [4Fe-4S] cluster. A run of 2 helical transmembrane segments spans residues 575-596 (AFYL…YWHW) and 643-665 (LSVW…MFLI). Chlorophyll a is bound by residues H654, M662, and Y670. W671 provides a ligand contact to phylloquinone. A helical membrane pass occupies residues 707 to 727 (LVGLAHFSVGYIFTYAAFLIA).

It belongs to the PsaA/PsaB family. As to quaternary structure, the PsaA/B heterodimer binds the P700 chlorophyll special pair and subsequent electron acceptors. PSI consists of a core antenna complex that captures photons, and an electron transfer chain that converts photonic excitation into a charge separation. The eukaryotic PSI reaction center is composed of at least 11 subunits. Requires P700 is a chlorophyll a/chlorophyll a' dimer, A0 is one or more chlorophyll a, A1 is one or both phylloquinones and FX is a shared 4Fe-4S iron-sulfur center. as cofactor.

It localises to the plastid. The protein localises to the chloroplast thylakoid membrane. The catalysed reaction is reduced [plastocyanin] + hnu + oxidized [2Fe-2S]-[ferredoxin] = oxidized [plastocyanin] + reduced [2Fe-2S]-[ferredoxin]. Functionally, psaA and PsaB bind P700, the primary electron donor of photosystem I (PSI), as well as the electron acceptors A0, A1 and FX. PSI is a plastocyanin-ferredoxin oxidoreductase, converting photonic excitation into a charge separation, which transfers an electron from the donor P700 chlorophyll pair to the spectroscopically characterized acceptors A0, A1, FX, FA and FB in turn. Oxidized P700 is reduced on the lumenal side of the thylakoid membrane by plastocyanin. In Staurastrum punctulatum (Green alga), this protein is Photosystem I P700 chlorophyll a apoprotein A2.